The primary structure comprises 377 residues: Diels-Alderase fsa2 (377 aa).

Belongs to the Diels-Alderase family.

It catalyses the reaction (5S)-3-[(2E,6R,8E,10E,12E)-2,6-dimethyltetradeca-2,8,10,12-tetraenoyl]-5-(hydroxymethyl)pyrrolidine-2,4-dione = trichosetin. The protein operates within mycotoxin biosynthesis. Its function is as follows. Diels-Alderase; part of the gene cluster that mediates the biosynthesis of equisetin, a trans-fused decalin-containing tetramic acid with antimicrobial activity. The PKS module of eqxS together with the enoylreductase eqxC catalyze the formation of the polyketide unit which is then conjugated to L-serine by the condensation domain of the eqxS NRPS module. Activity of the Dieckmann cyclase domain (RED) results in release of the Dieckmann product intermediate. Diels-Alderase eqx3 is involved in endo-selective Diels-Alder cycloaddition to form the decalin ring, leading to the production of N-desmethylequisetin also called trichosetin. Subsequent N-methylation is carried out by eqxD to give equisetin. In Fusarium heterosporum, this protein is Diels-Alderase fsa2.